A 29-amino-acid chain; its full sequence is Snake venom metalloproteinase bothrolysin (29 aa).

In terms of domain architecture, Peptidase M12B spans 6 to 29 (RYIELFLVVDSGMFMKYNGNSDKI). E9 is a binding site for Ca(2+).

Belongs to the venom metalloproteinase (M12B) family. Requires Zn(2+) as cofactor. As to expression, expressed by the venom gland.

It is found in the secreted. The enzyme catalyses Cleavage of 4-Gln-|-His-5, 9-Ser-|-His-10 and 14-Ala-|-Leu-15 of insulin B chain and Pro-|-Phe of angiotensin I.. In terms of biological role, snake venom zinc metalloproteinase that impairs hemostasis in the envenomed animal. This Bothrops jararaca (Jararaca) protein is Snake venom metalloproteinase bothrolysin.